The primary structure comprises 614 residues: DNA mismatch repair protein MutL (614 aa).

It belongs to the DNA mismatch repair MutL/HexB family.

Functionally, this protein is involved in the repair of mismatches in DNA. It is required for dam-dependent methyl-directed DNA mismatch repair. May act as a 'molecular matchmaker', a protein that promotes the formation of a stable complex between two or more DNA-binding proteins in an ATP-dependent manner without itself being part of a final effector complex. In Chlorobium phaeovibrioides (strain DSM 265 / 1930) (Prosthecochloris vibrioformis (strain DSM 265)), this protein is DNA mismatch repair protein MutL.